Consider the following 362-residue polypeptide: Probable endopolygalacturonase B (362 aa).

The N-terminal stretch at methionine 1–alanine 20 is a signal peptide. Positions alanine 21–lysine 25 are excised as a propeptide. The cysteines at positions 28 and 43 are disulfide-linked. 6 PbH1 repeats span residues alanine 155–glutamine 184, serine 185–serine 206, glycine 207–serine 227, valine 236–threonine 257, valine 265–glutamine 287, and threonine 299–glycine 344. Aspartate 199 (proton donor) is an active-site residue. Cysteine 201 and cysteine 217 are disulfide-bonded. Histidine 221 is a catalytic residue. The cysteines at positions 327 and 332 are disulfide-linked. A glycan (N-linked (GlcNAc...) asparagine) is linked at asparagine 334. Cysteine 351 and cysteine 360 are disulfide-bonded.

The protein belongs to the glycosyl hydrolase 28 family.

Its subcellular location is the secreted. It carries out the reaction (1,4-alpha-D-galacturonosyl)n+m + H2O = (1,4-alpha-D-galacturonosyl)n + (1,4-alpha-D-galacturonosyl)m.. In terms of biological role, involved in maceration and soft-rotting of plant tissue. Hydrolyzes the 1,4-alpha glycosidic bonds of de-esterified pectate in the smooth region of the plant cell wall. This is Probable endopolygalacturonase B (pgaB) from Aspergillus niger (strain ATCC MYA-4892 / CBS 513.88 / FGSC A1513).